A 315-amino-acid polypeptide reads, in one-letter code: 4-hydroxy-3-methylbut-2-enyl diphosphate reductase (315 aa).

A [4Fe-4S] cluster-binding site is contributed by Cys12. Residues His43 and His81 each coordinate (2E)-4-hydroxy-3-methylbut-2-enyl diphosphate. His43 and His81 together coordinate dimethylallyl diphosphate. Residues His43 and His81 each coordinate isopentenyl diphosphate. Residue Cys103 coordinates [4Fe-4S] cluster. A (2E)-4-hydroxy-3-methylbut-2-enyl diphosphate-binding site is contributed by His131. His131 contacts dimethylallyl diphosphate. An isopentenyl diphosphate-binding site is contributed by His131. Residue Glu133 is the Proton donor of the active site. Residue Thr170 participates in (2E)-4-hydroxy-3-methylbut-2-enyl diphosphate binding. Cys198 serves as a coordination point for [4Fe-4S] cluster. (2E)-4-hydroxy-3-methylbut-2-enyl diphosphate-binding residues include Ser226, Asn228, and Ser271. Ser226, Asn228, and Ser271 together coordinate dimethylallyl diphosphate. Ser226, Asn228, and Ser271 together coordinate isopentenyl diphosphate.

This sequence belongs to the IspH family. The cofactor is [4Fe-4S] cluster.

It catalyses the reaction isopentenyl diphosphate + 2 oxidized [2Fe-2S]-[ferredoxin] + H2O = (2E)-4-hydroxy-3-methylbut-2-enyl diphosphate + 2 reduced [2Fe-2S]-[ferredoxin] + 2 H(+). It carries out the reaction dimethylallyl diphosphate + 2 oxidized [2Fe-2S]-[ferredoxin] + H2O = (2E)-4-hydroxy-3-methylbut-2-enyl diphosphate + 2 reduced [2Fe-2S]-[ferredoxin] + 2 H(+). The protein operates within isoprenoid biosynthesis; dimethylallyl diphosphate biosynthesis; dimethylallyl diphosphate from (2E)-4-hydroxy-3-methylbutenyl diphosphate: step 1/1. Its pathway is isoprenoid biosynthesis; isopentenyl diphosphate biosynthesis via DXP pathway; isopentenyl diphosphate from 1-deoxy-D-xylulose 5-phosphate: step 6/6. In terms of biological role, catalyzes the conversion of 1-hydroxy-2-methyl-2-(E)-butenyl 4-diphosphate (HMBPP) into a mixture of isopentenyl diphosphate (IPP) and dimethylallyl diphosphate (DMAPP). Acts in the terminal step of the DOXP/MEP pathway for isoprenoid precursor biosynthesis. The sequence is that of 4-hydroxy-3-methylbut-2-enyl diphosphate reductase from Anoxybacillus flavithermus (strain DSM 21510 / WK1).